Reading from the N-terminus, the 126-residue chain is Fatty acid-binding protein 1, liver (126 aa).

Belongs to the calycin superfamily. Fatty-acid binding protein (FABP) family.

It is found in the cytoplasm. In terms of biological role, binds free fatty acids and their coenzyme A derivatives, bilirubin, and some other small molecules in the cytoplasm. May be involved in intracellular lipid transport. The specificity of axolotl L-FABP differs from that of LB-FABP. This chain is Fatty acid-binding protein 1, liver, found in Ambystoma mexicanum (Axolotl).